A 273-amino-acid polypeptide reads, in one-letter code: 2,3,4,5-tetrahydropyridine-2,6-dicarboxylate N-succinyltransferase (273 aa).

Residues R104 and D141 each coordinate substrate.

It belongs to the transferase hexapeptide repeat family. In terms of assembly, homotrimer.

It is found in the cytoplasm. The enzyme catalyses (S)-2,3,4,5-tetrahydrodipicolinate + succinyl-CoA + H2O = (S)-2-succinylamino-6-oxoheptanedioate + CoA. The protein operates within amino-acid biosynthesis; L-lysine biosynthesis via DAP pathway; LL-2,6-diaminopimelate from (S)-tetrahydrodipicolinate (succinylase route): step 1/3. The sequence is that of 2,3,4,5-tetrahydropyridine-2,6-dicarboxylate N-succinyltransferase from Nitrosococcus oceani (strain ATCC 19707 / BCRC 17464 / JCM 30415 / NCIMB 11848 / C-107).